Consider the following 989-residue polypeptide: ATP-dependent 6-phosphofructokinase subunit alpha (989 aa).

Positions 1–585 are N-terminal catalytic PFK domain 1; that stretch reads MPEPSISDLS…SYENFLSVSK (585 aa). Residues Gly-220, 283–284, and 313–316 contribute to the ATP site; these read RC and GDGS. Asp-314 is a binding site for Mg(2+). Residues 359-361, Arg-396, 403-405, Glu-460, Arg-487, and 493-496 each bind beta-D-fructose 6-phosphate; these read SID, MGR, and HVQR. Asp-361 serves as the catalytic Proton acceptor. An interdomain linker region spans residues 586-599; sequence YDDGSYLVPESSRL. The tract at residues 600 to 989 is C-terminal regulatory PFK domain 2; that stretch reads NIAIIHVGAP…LSGRLSIRTT (390 aa). Residues Arg-670, 727–731, Arg-765, 772–774, Glu-832, Arg-858, 864–867, and Arg-963 each bind beta-D-fructose 2,6-bisphosphate; these read TVSNN, QGG, and HVQQ.

The protein belongs to the phosphofructokinase type A (PFKA) family. ATP-dependent PFK group I subfamily. Eukaryotic two domain clade 'E' sub-subfamily. Heterododecamer of 4 alpha, 4 beta and 4 gamma chains. Requires Mg(2+) as cofactor.

The protein localises to the cytoplasm. The enzyme catalyses beta-D-fructose 6-phosphate + ATP = beta-D-fructose 1,6-bisphosphate + ADP + H(+). It participates in carbohydrate degradation; glycolysis; D-glyceraldehyde 3-phosphate and glycerone phosphate from D-glucose: step 3/4. Its activity is regulated as follows. Allosterically activated by ADP, AMP, or fructose 2,6-bisphosphate, and allosterically inhibited by ATP or citrate. Its function is as follows. Catalyzes the phosphorylation of D-fructose 6-phosphate to fructose 1,6-bisphosphate by ATP, the first committing step of glycolysis. The protein is ATP-dependent 6-phosphofructokinase subunit alpha (PFK1) of Komagataella pastoris (Yeast).